A 258-amino-acid chain; its full sequence is MATGRAHRPATRSRGIPEATVARLPLYLRALTALSERSVPTVSSEELAAAAGVNSAKLRKDFSYLGSYGTRGVGYDVEYLVYQISRELGLTQDWPVVIVGIGNLGAALANYGGFASRGFRVAALIDADPGMAGKPVAGIPVQHTDELEKIIQDDGVSIGVIATPAGAAQQVCDRLVAAGVTSILNFAPTVLNVPEGVDVRKVDLSIELQILAFHEQRKAGEEAAADGAAPPVAARKQQRSTGSADQGPDGDVPAVMPA.

The segment at residues 26-65 (LYLRALTALSERSVPTVSSEELAAAAGVNSAKLRKDFSYL) is a DNA-binding region (H-T-H motif). 100 to 105 (GIGNLG) lines the NAD(+) pocket. The tract at residues 219-258 (AGEEAAADGAAPPVAARKQQRSTGSADQGPDGDVPAVMPA) is disordered. Residues 225 to 234 (ADGAAPPVAA) show a composition bias toward low complexity.

The protein belongs to the transcriptional regulatory Rex family. Homodimer.

Its subcellular location is the cytoplasm. Its function is as follows. Modulates transcription of respiratory genes in response to changes in cellular NADH/NAD(+) redox state. Binds to the DNA sequence motif 5'-TGTGAACGCGTTCACA-3' in the promoter of the cydABCD operon. May play a general role as a sensor of cellular redox balance. This chain is Redox-sensing transcriptional repressor Rex, found in Streptomyces coelicolor (strain ATCC BAA-471 / A3(2) / M145).